Here is a 360-residue protein sequence, read N- to C-terminus: Phosphoserine aminotransferase (360 aa).

Arginine 42 is an L-glutamate binding site. Pyridoxal 5'-phosphate is bound by residues 76 to 77 (AS), tryptophan 102, threonine 152, aspartate 172, and glutamine 195. Lysine 196 bears the N6-(pyridoxal phosphate)lysine mark. 237–238 (NT) serves as a coordination point for pyridoxal 5'-phosphate.

This sequence belongs to the class-V pyridoxal-phosphate-dependent aminotransferase family. SerC subfamily. As to quaternary structure, homodimer. Pyridoxal 5'-phosphate serves as cofactor.

It is found in the cytoplasm. The enzyme catalyses O-phospho-L-serine + 2-oxoglutarate = 3-phosphooxypyruvate + L-glutamate. The catalysed reaction is 4-(phosphooxy)-L-threonine + 2-oxoglutarate = (R)-3-hydroxy-2-oxo-4-phosphooxybutanoate + L-glutamate. It participates in amino-acid biosynthesis; L-serine biosynthesis; L-serine from 3-phospho-D-glycerate: step 2/3. Its function is as follows. Catalyzes the reversible conversion of 3-phosphohydroxypyruvate to phosphoserine and of 3-hydroxy-2-oxo-4-phosphonooxybutanoate to phosphohydroxythreonine. The polypeptide is Phosphoserine aminotransferase (Bacillus cereus (strain ATCC 10987 / NRS 248)).